The primary structure comprises 156 residues: Anaerobic ribonucleoside-triphosphate reductase-activating protein (156 aa).

Residues cysteine 26, cysteine 30, and cysteine 33 each coordinate [4Fe-4S] cluster. Residues 32-34 (GCY) and glycine 72 contribute to the S-adenosyl-L-methionine site.

The protein belongs to the organic radical-activating enzymes family. In terms of assembly, forms a tetramer composed of two NrdD and two NrdG subunits. [4Fe-4S] cluster serves as cofactor.

The catalysed reaction is glycyl-[protein] + reduced [flavodoxin] + S-adenosyl-L-methionine = glycin-2-yl radical-[protein] + semiquinone [flavodoxin] + 5'-deoxyadenosine + L-methionine + H(+). Activation of anaerobic ribonucleoside-triphosphate reductase under anaerobic conditions by generation of an organic free radical, using S-adenosylmethionine and reduced flavodoxin as cosubstrates to produce 5'-deoxy-adenosine. The chain is Anaerobic ribonucleoside-triphosphate reductase-activating protein (NRDG) from Escherichia coli (Bacteriophage T4).